The sequence spans 87 residues: DNA-directed RNA polymerase subunit omega (87 aa).

Belongs to the RNA polymerase subunit omega family. In terms of assembly, the RNAP catalytic core consists of 2 alpha, 1 beta, 1 beta' and 1 omega subunit. When a sigma factor is associated with the core the holoenzyme is formed, which can initiate transcription.

It carries out the reaction RNA(n) + a ribonucleoside 5'-triphosphate = RNA(n+1) + diphosphate. Its function is as follows. Promotes RNA polymerase assembly. Latches the N- and C-terminal regions of the beta' subunit thereby facilitating its interaction with the beta and alpha subunits. The polypeptide is DNA-directed RNA polymerase subunit omega (Pseudomonas syringae pv. syringae (strain B728a)).